The chain runs to 122 residues: RxLR effector protein Avh52 (122 aa).

The signal sequence occupies residues 1–21 (MRLTSILVLVIAATFHTTGTA). A RxLR-dEER motif is present at residues 50 to 68 (RLLRRVEKDKVDYEQDEQR). Positions 69–86 (SFGALKDAVKKLNPVTAV) are TAP1-binding. A nuclear localization signal (NLS) region spans residues 87–98 (KKFFKQRARRKK).

Belongs to the RxLR effector family. Interacts with host acetyl transferase TAP1.

It localises to the secreted. The protein localises to the host nucleus. In terms of biological role, effector that suppresses plant defense responses during the early stages of pathogen infection. Suppresses cell death induced by effectors and PAMPs in plant hosts. Interacts with host acetyltransferase TAP1 and causes TAP1 relocation into the nucleus where it acetylates histones H2A and H3 during early infection, thereby promoting susceptibility of host plant to P.sojae. In Phytophthora sojae (Soybean stem and root rot agent), this protein is RxLR effector protein Avh52.